The sequence spans 212 residues: Large ribosomal subunit protein uL4 (212 aa).

This sequence belongs to the universal ribosomal protein uL4 family. In terms of assembly, part of the 50S ribosomal subunit.

In terms of biological role, one of the primary rRNA binding proteins, this protein initially binds near the 5'-end of the 23S rRNA. It is important during the early stages of 50S assembly. It makes multiple contacts with different domains of the 23S rRNA in the assembled 50S subunit and ribosome. Its function is as follows. Forms part of the polypeptide exit tunnel. The polypeptide is Large ribosomal subunit protein uL4 (Caulobacter vibrioides (strain ATCC 19089 / CIP 103742 / CB 15) (Caulobacter crescentus)).